The following is a 289-amino-acid chain: B- and T-lymphocyte attenuator (289 aa).

An N-terminal signal peptide occupies residues 1–30 (MKTLPAMLGTGKLFWVFFLIPYLDIWNIHG). Positions 31-132 (KESCDVQLYI…LIESHSTTLY (102 aa)) constitute an Ig-like V-type domain. The Extracellular portion of the chain corresponds to 31 to 157 (KESCDVQLYI…MASRPWLLYR (127 aa)). 3 cysteine pairs are disulfide-bonded: Cys-34-Cys-63, Cys-58-Cys-115, and Cys-72-Cys-79. N-linked (GlcNAc...) asparagine glycans are attached at residues Asn-75, Asn-94, and Asn-110. A helical transmembrane segment spans residues 158–178 (LLPLGGLPLLITTCFCLFCCL). Residues 179–289 (RRHQGKQNEL…TEYASICVRS (111 aa)) are Cytoplasmic-facing.

In terms of assembly, interacts with tyrosine phosphatases PTPN6/SHP-1 and PTPN11/SHP-2. Interacts with TNFRSF14/HVEM (via cysteine-rich domain 1). Phosphorylated on Tyr residues by TNFRSF14 and by antigen receptors cross-linking, both inducing association with PTPN6 and PTPN11. In terms of processing, N-glycosylated.

It is found in the cell membrane. Inhibitory receptor on lymphocytes that negatively regulates antigen receptor signaling via PTPN6/SHP-1 and PTPN11/SHP-2. May interact in cis (on the same cell) or in trans (on other cells) with TNFRSF14. In cis interactions, appears to play an immune regulatory role inhibiting in trans interactions in naive T cells to maintain a resting state. In trans interactions, can predominate during adaptive immune response to provide survival signals to effector T cells. The polypeptide is B- and T-lymphocyte attenuator (Homo sapiens (Human)).